Reading from the N-terminus, the 1367-residue chain is Dynactin, 150 kDa isoform (1367 aa).

The CAP-Gly domain maps to 28–70 (GETAFAPGTWVGIELDEPSGKNDGSVQGERYFNCEMGYGMFVR). Residues 76–318 (VIAQPPPPPP…NLKATTITPR (243 aa)) form a disordered region. Low complexity-rich tracts occupy residues 88–99 (TFRRSVTTRPTS) and 132–149 (PSRT…RSPT). The segment covering 150 to 163 (KQLATASSSGNPSR) has biased composition (polar residues). Low complexity-rich tracts occupy residues 164-190 (SGTP…SRHS) and 243-259 (STGS…KRGS). 3 coiled-coil regions span residues 321–598 (ITNT…MQEE), 637–698 (LQSD…EAEQ), and 1039–1199 (AELK…RARL).

It belongs to the dynactin 150 kDa subunit family. Large macromolecular complex of at least 10 components; p150(glued) binds directly to microtubules and to cytoplasmic dynein.

It is found in the cytoplasm. Its subcellular location is the cytoskeleton. In terms of biological role, required for the cytoplasmic dynein-driven retrograde movement of vesicles and organelles along microtubules. Dynein-dynactin interaction is a key component of the mechanism of axonal transport of vesicles and organelles. This chain is Dynactin, 150 kDa isoform (ro-3), found in Neurospora crassa (strain ATCC 24698 / 74-OR23-1A / CBS 708.71 / DSM 1257 / FGSC 987).